The sequence spans 316 residues: Transaldolase A (316 aa).

The Schiff-base intermediate with substrate role is filled by Lys131.

The protein belongs to the transaldolase family. Type 1 subfamily. In terms of assembly, homodimer.

The protein resides in the cytoplasm. The enzyme catalyses D-sedoheptulose 7-phosphate + D-glyceraldehyde 3-phosphate = D-erythrose 4-phosphate + beta-D-fructose 6-phosphate. The protein operates within carbohydrate degradation; pentose phosphate pathway; D-glyceraldehyde 3-phosphate and beta-D-fructose 6-phosphate from D-ribose 5-phosphate and D-xylulose 5-phosphate (non-oxidative stage): step 2/3. In terms of biological role, transaldolase is important for the balance of metabolites in the pentose-phosphate pathway. This is Transaldolase A from Shigella flexneri.